A 141-amino-acid polypeptide reads, in one-letter code: Large ribosomal subunit protein uL11c (141 aa).

Belongs to the universal ribosomal protein uL11 family. Part of the ribosomal stalk of the 50S ribosomal subunit. Interacts with L10 and the large rRNA to form the base of the stalk. L10 forms an elongated spine to which L12 dimers bind in a sequential fashion forming a multimeric L10(L12)X complex.

It is found in the plastid. The protein localises to the chloroplast. Its function is as follows. Forms part of the ribosomal stalk which helps the ribosome interact with GTP-bound translation factors. This Pyropia yezoensis (Susabi-nori) protein is Large ribosomal subunit protein uL11c.